Consider the following 605-residue polypeptide: Tyrosyl-DNA phosphodiesterase 1 (605 aa).

Residues R81–P86 carry the Nuclear localization signal motif. The active-site Nucleophile is H236. K238 provides a ligand contact to substrate. The interval S379–S382 is interaction with DNA. The active-site Proton donor/acceptor is the H466. K468 lines the substrate pocket.

Belongs to the tyrosyl-DNA phosphodiesterase family. In terms of tissue distribution, ubiquitous, with a low level in roots.

The protein localises to the nucleus. With respect to regulation, inhibited by vanadate analogs. In terms of biological role, DNA repair enzyme that can remove a variety of covalent adducts from DNA through hydrolysis of a 3'-phosphodiester bond, giving rise to DNA with a free 3' phosphate. Catalyzes the hydrolysis of dead-end complexes between DNA and the topoisomerase I active site tyrosine residue. The polypeptide is Tyrosyl-DNA phosphodiesterase 1 (Arabidopsis thaliana (Mouse-ear cress)).